The primary structure comprises 340 residues: Ketol-acid reductoisomerase (NADP(+)) (340 aa).

In terms of domain architecture, KARI N-terminal Rossmann spans 1 to 182; sequence MRVYYDRDCD…GGGRSGIIET (182 aa). NADP(+) is bound by residues 24-27, R48, S51, S53, and 83-86; these read YGSQ and DELQ. Residue H108 is part of the active site. Position 134 (G134) interacts with NADP(+). The region spanning 183–329 is the KARI C-terminal knotted domain; it reads NFRQECETDL…EKLRGMMPWI (147 aa). D191, E195, E227, and E231 together coordinate Mg(2+). S252 lines the substrate pocket.

It belongs to the ketol-acid reductoisomerase family. It depends on Mg(2+) as a cofactor.

The catalysed reaction is (2R)-2,3-dihydroxy-3-methylbutanoate + NADP(+) = (2S)-2-acetolactate + NADPH + H(+). The enzyme catalyses (2R,3R)-2,3-dihydroxy-3-methylpentanoate + NADP(+) = (S)-2-ethyl-2-hydroxy-3-oxobutanoate + NADPH + H(+). The protein operates within amino-acid biosynthesis; L-isoleucine biosynthesis; L-isoleucine from 2-oxobutanoate: step 2/4. It participates in amino-acid biosynthesis; L-valine biosynthesis; L-valine from pyruvate: step 2/4. In terms of biological role, involved in the biosynthesis of branched-chain amino acids (BCAA). Catalyzes an alkyl-migration followed by a ketol-acid reduction of (S)-2-acetolactate (S2AL) to yield (R)-2,3-dihydroxy-isovalerate. In the isomerase reaction, S2AL is rearranged via a Mg-dependent methyl migration to produce 3-hydroxy-3-methyl-2-ketobutyrate (HMKB). In the reductase reaction, this 2-ketoacid undergoes a metal-dependent reduction by NADPH to yield (R)-2,3-dihydroxy-isovalerate. The chain is Ketol-acid reductoisomerase (NADP(+)) from Cereibacter sphaeroides (strain ATCC 17023 / DSM 158 / JCM 6121 / CCUG 31486 / LMG 2827 / NBRC 12203 / NCIMB 8253 / ATH 2.4.1.) (Rhodobacter sphaeroides).